The chain runs to 286 residues: Transmembrane protein 156 (286 aa).

At Met1 to Thr4 the chain is on the cytoplasmic side. Residues Ala5–Phe25 form a helical membrane-spanning segment. Topologically, residues Lys26–Thr214 are extracellular. N-linked (GlcNAc...) asparagine glycans are attached at residues Asn45, Asn54, Asn76, and Asn142. A helical membrane pass occupies residues Trp215–Leu235. Over Glu236–Glu286 the chain is Cytoplasmic.

The protein resides in the membrane. The chain is Transmembrane protein 156 (Tmem156) from Rattus norvegicus (Rat).